Here is a 228-residue protein sequence, read N- to C-terminus: Thymidylate kinase (228 aa).

Residues M1 to S10 are compositionally biased toward polar residues. The interval M1–G23 is disordered. Residue G20 to S27 participates in ATP binding.

Belongs to the thymidylate kinase family.

It catalyses the reaction dTMP + ATP = dTDP + ADP. Functionally, phosphorylation of dTMP to form dTDP in both de novo and salvage pathways of dTTP synthesis. This Bradyrhizobium diazoefficiens (strain JCM 10833 / BCRC 13528 / IAM 13628 / NBRC 14792 / USDA 110) protein is Thymidylate kinase.